A 550-amino-acid chain; its full sequence is MSAKEVLFGNDARVKMLAGVNVLANAVKVTLGPKGRNVVLDKSFGAPLITKDGVSVAKEIELEDKFENMGAQMVKEVASKANDAAGDGTTTATVLAQSIVTEGLKAVAAGMNPMDLKRGIDKAVIAAVAELKNLSQECSDTKAIAQVGTISANSDETIGEIIATAMERVGKEGVITVEEGQALENELDVVEGMQFDRGYLSPYFINKPETGSVELETPFILLVDKKVSNIRELLPILEGLAKTGKPLLIVAEDVEGEALATLVVNNMRGIVKVAAVKAPGFGDRRKAMLQDIAILTGGTVIAEEIGLELEKATLEDLGTAKRVVITKDDTTIIDGTGEETQIKARVAQIKIQAEESTSDYDKEKLQERMAKLAGGVAVIKVGAATEVEMKEKKARVEDALHATRAAVEEGVVAGGGVALVRVASKIGEVEVINEDQKHGVVIALRAMEAPLRQIATNAGEEGSVVANNVKNGTGNYGYNAGNDTYGDMLEMGILDPTKVTRSALQFASSIAGLMITTEAMVGEIPQDAAGAPDMGGMGGMGGMGGMGGMM.

ATP-binding positions include 30–33, K51, 87–91, G415, and D495; these read TLGP and DGTTT.

It belongs to the chaperonin (HSP60) family. In terms of assembly, forms a cylinder of 14 subunits composed of two heptameric rings stacked back-to-back. Interacts with the co-chaperonin GroES.

Its subcellular location is the cytoplasm. It catalyses the reaction ATP + H2O + a folded polypeptide = ADP + phosphate + an unfolded polypeptide.. Functionally, together with its co-chaperonin GroES, plays an essential role in assisting protein folding. The GroEL-GroES system forms a nano-cage that allows encapsulation of the non-native substrate proteins and provides a physical environment optimized to promote and accelerate protein folding. This Shewanella piezotolerans (strain WP3 / JCM 13877) protein is Chaperonin GroEL.